The primary structure comprises 320 residues: Fructose-1,6-bisphosphatase class 1 (320 aa).

4 residues coordinate Mg(2+): Glu-84, Asp-103, Leu-105, and Asp-106. Residues 106–109 (DGSS), Asn-196, and Lys-262 each bind substrate. Glu-268 contributes to the Mg(2+) binding site.

It belongs to the FBPase class 1 family. As to quaternary structure, homotetramer. Mg(2+) is required as a cofactor.

The protein resides in the cytoplasm. The enzyme catalyses beta-D-fructose 1,6-bisphosphate + H2O = beta-D-fructose 6-phosphate + phosphate. It functions in the pathway carbohydrate biosynthesis; gluconeogenesis. This is Fructose-1,6-bisphosphatase class 1 from Shewanella amazonensis (strain ATCC BAA-1098 / SB2B).